Consider the following 617-residue polypeptide: Dihydroxy-acid dehydratase (617 aa).

Asp81 contacts Mg(2+). Cys122 contributes to the [2Fe-2S] cluster binding site. Mg(2+)-binding residues include Asp123 and Lys124. Position 124 is an N6-carboxylysine (Lys124). Cys195 contacts [2Fe-2S] cluster. Glu491 lines the Mg(2+) pocket. The active-site Proton acceptor is Ser517.

The protein belongs to the IlvD/Edd family. As to quaternary structure, homodimer. [2Fe-2S] cluster is required as a cofactor. The cofactor is Mg(2+).

The enzyme catalyses (2R)-2,3-dihydroxy-3-methylbutanoate = 3-methyl-2-oxobutanoate + H2O. It catalyses the reaction (2R,3R)-2,3-dihydroxy-3-methylpentanoate = (S)-3-methyl-2-oxopentanoate + H2O. The protein operates within amino-acid biosynthesis; L-isoleucine biosynthesis; L-isoleucine from 2-oxobutanoate: step 3/4. Its pathway is amino-acid biosynthesis; L-valine biosynthesis; L-valine from pyruvate: step 3/4. Functionally, functions in the biosynthesis of branched-chain amino acids. Catalyzes the dehydration of (2R,3R)-2,3-dihydroxy-3-methylpentanoate (2,3-dihydroxy-3-methylvalerate) into 2-oxo-3-methylpentanoate (2-oxo-3-methylvalerate) and of (2R)-2,3-dihydroxy-3-methylbutanoate (2,3-dihydroxyisovalerate) into 2-oxo-3-methylbutanoate (2-oxoisovalerate), the penultimate precursor to L-isoleucine and L-valine, respectively. This is Dihydroxy-acid dehydratase from Caulobacter vibrioides (strain ATCC 19089 / CIP 103742 / CB 15) (Caulobacter crescentus).